The following is a 187-amino-acid chain: Phosphatidylethanolamine-binding protein 1 (187 aa).

Phosphoserine is present on residues Ser-6 and Ser-13. Position 42 is a phosphothreonine (Thr-42). Ser-52 and Ser-98 each carry phosphoserine. Positions 93-134 (KGGNISSGTVLSDYVGSGPPKGTGLHRYVWLVYEQDGPLKCD) are interaction with RAF1.

This sequence belongs to the phosphatidylethanolamine-binding protein family. As to quaternary structure, has a tendency to form dimers by disulfide cross-linking. Interacts with RAF1 and this interaction is enhanced if RAF1 is phosphorylated on residues 'Ser-338', 'Ser-339', 'Tyr-340' and 'Tyr-341'. Interacts with ALOX15; in response to IL13/interleukin-13, prevents the interaction of PEBP1 with RAF1 to activate the ERK signaling cascade.

Its subcellular location is the cytoplasm. Its function is as follows. Binds ATP, opioids and phosphatidylethanolamine. Has lower affinity for phosphatidylinositol and phosphatidylcholine. Serine protease inhibitor which inhibits thrombin, neuropsin and chymotrypsin but not trypsin, tissue type plasminogen activator and elastase. Inhibits the kinase activity of RAF1 by inhibiting its activation and by dissociating the RAF1/MEK complex and acting as a competitive inhibitor of MEK phosphorylation. HCNP may be involved in the function of the presynaptic cholinergic neurons of the central nervous system. HCNP increases the production of choline acetyltransferase but not acetylcholinesterase. Seems to be mediated by a specific receptor. The sequence is that of Phosphatidylethanolamine-binding protein 1 (PEBP1) from Oryctolagus cuniculus (Rabbit).